We begin with the raw amino-acid sequence, 250 residues long: Functional amyloid sbunit FapE (250 aa).

An N-terminal signal peptide occupies residues 1–27 (MLREHAMYTHHCFVLACCLGAALPAPA).

Belongs to the FapE family. In terms of assembly, a minor component of purified amyloid fibrils. Fibrils are resistant to boiling in 2% (weight/vol) SDS and require &gt;90% (vol/vol) formic acid to dissolve.

It localises to the fimbrium. The protein resides in the secreted. A minor component of the functional amyloid in this bacterium. Upon overexpression of the endogenous six-gene locus (fapA-fapF), cells form large clumps during liquid growth, make large amounts of biofilm and produce amyloid fibrils. In Pseudomonas aeruginosa (strain ATCC 15692 / DSM 22644 / CIP 104116 / JCM 14847 / LMG 12228 / 1C / PRS 101 / PAO1), this protein is Functional amyloid sbunit FapE.